Here is a 600-residue protein sequence, read N- to C-terminus: Single-strand DNA endonuclease 1 (600 aa).

The interval 1–97 (MGVKYLWDVL…KRRLKARFEI (97 aa)) is N-domain. Residues 2–97 (GVKYLWDVLE…KRRLKARFEI (96 aa)) form an XPG-N domain region. Residues D30, D76, E142, E144, D163, D165, and D215 each contribute to the Mg(2+) site. The tract at residues 130-215 (STLGILCLDG…IALALLLGSD (86 aa)) is XPG-I domain. 2 I-domain regions span residues 130-218 (STLG…DYSQ) and 130-219 (STLG…YSQG). A 5'-3' exonuclease domain region spans residues 215–353 (DYSQGVRGLR…ILPKVAERNL (139 aa)). Residues 433–458 (MAAKKKKPKPKQKQKETSSPTKSSSL) are disordered. The span at 435-444 (AKKKKPKPKQ) shows a compositional bias: basic residues.

Belongs to the XPG/RAD2 endonuclease family. GEN subfamily. Mg(2+) is required as a cofactor.

The protein resides in the nucleus. Endonuclease which cleaves flap structures at the junction between single-stranded DNA and double-stranded DNA with a specific cleavage site in the 5' overhang strand exactly one nucleotide 3' of the branch point. Structure- and sequence-specific nuclease that resolves holliday junctions (HJs) by symmetrically oriented incisions in two opposing strands near the junction point, thus leading to ligatable products; HJs are physical links between homologous DNA molecules that arise as central intermediary structures during homologous recombination and repair in meiotic and somatic cells. Structure-specific nuclease with 5'-flap endonuclease activity, preferentially cleaving static flaps 5' overhang strand exactly one nucleotide in the 3' direction of the branch point and, to lower extent, on the two neighboring positions. Also able to cleave double-stranded flap strand 1 one nucleotide in the 3' direction of the branch point. Together with MUS81, essential for the resolution of toxic replication structures to ensure genome stability, and to maintain telomere integrity and replication. The chain is Single-strand DNA endonuclease 1 from Arabidopsis thaliana (Mouse-ear cress).